Reading from the N-terminus, the 188-residue chain is Ubiquitin-conjugating enzyme E2-21 kDa (188 aa).

The 180-residue stretch at 3-182 (STEKRLLKEY…VHYYIAKYSA (180 aa)) folds into the UBC core domain. Cys119 serves as the catalytic Glycyl thioester intermediate.

It belongs to the ubiquitin-conjugating enzyme family.

The catalysed reaction is S-ubiquitinyl-[E1 ubiquitin-activating enzyme]-L-cysteine + [E2 ubiquitin-conjugating enzyme]-L-cysteine = [E1 ubiquitin-activating enzyme]-L-cysteine + S-ubiquitinyl-[E2 ubiquitin-conjugating enzyme]-L-cysteine.. It functions in the pathway protein modification; protein ubiquitination. Catalyzes the covalent attachment of ubiquitin to other proteins. Essential for peroxisome biogenesis. Required for UBC4-independent ubiquitination of PEX5. The chain is Ubiquitin-conjugating enzyme E2-21 kDa (PEX4) from Pichia angusta (Yeast).